Consider the following 199-residue polypeptide: HTH-type transcriptional regulator BetI (199 aa).

The HTH tetR-type domain maps to 8–68; that stretch reads EIRKPQLVKA…ETMREILRQL (61 aa). Residues 31 to 50 constitute a DNA-binding region (H-T-H motif); it reads SISLISKEAGVSTGIINHYF.

It participates in amine and polyamine biosynthesis; betaine biosynthesis via choline pathway [regulation]. In terms of biological role, repressor involved in the biosynthesis of the osmoprotectant glycine betaine. It represses transcription of the choline transporter BetT and the genes of BetAB involved in the synthesis of glycine betaine. The chain is HTH-type transcriptional regulator BetI from Vibrio parahaemolyticus serotype O3:K6 (strain RIMD 2210633).